The sequence spans 534 residues: Cyclin-L1 (534 aa).

Cyclin-like stretches follow at residues 94-196 (ELIQ…RVLK) and 209-293 (KIIV…KILQ). A disordered region spans residues 327–534 (LPEGAPVLDN…DHPGHSRHRR (208 aa)). Residues 389-399 (KGRESRSRSGS) show a composition bias toward basic and acidic residues. Low complexity-rich tracts occupy residues 400–412 (RDQS…SRSA) and 437–453 (RSGS…TYKS). The segment at 400–436 (RDQSYSRSPSRSASPKHRKSESYSTSSGSKSHSRSRS) is RS. Over residues 468-485 (SAHKARKSRSRSSSRSRS) the composition is skewed to basic residues. Positions 486–495 (RSRERSDHSG) are enriched in basic and acidic residues. A compositionally biased stretch (basic residues) spans 496–511 (KYKKKSHYYRNHRHER). Basic and acidic residues predominate over residues 512–528 (SRSYERASHRYDRDHPG).

This sequence belongs to the cyclin family. Cyclin L subfamily.

Its subcellular location is the nucleus speckle. It localises to the nucleus. The protein resides in the nucleoplasm. Functionally, involved in pre-mRNA splicing. This Gallus gallus (Chicken) protein is Cyclin-L1 (CCNL1).